The chain runs to 38 residues: Spheniscin-2 (38 aa).

Intrachain disulfides connect cysteine 5–cysteine 33, cysteine 12–cysteine 27, and cysteine 17–cysteine 34.

As to quaternary structure, monomer. As to expression, secreted into the stomach cavity.

It localises to the secreted. Functionally, has antifungal activity and antibacterial activity against Gram-positive and Gram-negative bacteria. Involved in the process of food preservation in the stomach during the incubation fast. May also be present during infection. This is Spheniscin-2 from Aptenodytes patagonicus (King penguin).